The chain runs to 236 residues: Urease accessory protein UreG 2 (236 aa).

Residues 1–40 (MEASVHIGNSVPHAHLHSAAPARPADPVRPDGSRRALRIG) form a disordered region. A GTP-binding site is contributed by 43–50 (GPVGSGKT).

The protein belongs to the SIMIBI class G3E GTPase family. UreG subfamily. As to quaternary structure, homodimer. UreD, UreF and UreG form a complex that acts as a GTP-hydrolysis-dependent molecular chaperone, activating the urease apoprotein by helping to assemble the nickel containing metallocenter of UreC. The UreE protein probably delivers the nickel.

It is found in the cytoplasm. Its function is as follows. Facilitates the functional incorporation of the urease nickel metallocenter. This process requires GTP hydrolysis, probably effectuated by UreG. The sequence is that of Urease accessory protein UreG 2 from Saccharopolyspora erythraea (strain ATCC 11635 / DSM 40517 / JCM 4748 / NBRC 13426 / NCIMB 8594 / NRRL 2338).